We begin with the raw amino-acid sequence, 143 residues long: Putative glycerol transporter Lin0368 (143 aa).

Transmembrane regions (helical) follow at residues 6–26 (GMIG…PLAE), 27–47 (NYGI…MWFM), 60–80 (AAFV…DVFM), and 90–110 (LPTI…AAAI). The tract at residues 118-143 (HEAKQEKTEPGMNIKEEERLNENQLV) is disordered.

The protein resides in the membrane. In terms of biological role, could be involved in the glycerol uptake either via facilitated diffusion or active transport. This Listeria innocua serovar 6a (strain ATCC BAA-680 / CLIP 11262) protein is Putative glycerol transporter Lin0368.